Here is a 407-residue protein sequence, read N- to C-terminus: Argininosuccinate synthase (407 aa).

10–18 contacts ATP; the sequence is AYSGGLDTS. 2 residues coordinate L-citrulline: Y88 and S93. G118 is an ATP binding site. Positions 120, 124, and 125 each coordinate L-aspartate. N124 is a binding site for L-citrulline. The L-citrulline site is built by R128, S177, S186, E263, and Y275.

The protein belongs to the argininosuccinate synthase family. Type 1 subfamily. As to quaternary structure, homotetramer.

It localises to the cytoplasm. The enzyme catalyses L-citrulline + L-aspartate + ATP = 2-(N(omega)-L-arginino)succinate + AMP + diphosphate + H(+). It functions in the pathway amino-acid biosynthesis; L-arginine biosynthesis; L-arginine from L-ornithine and carbamoyl phosphate: step 2/3. This chain is Argininosuccinate synthase, found in Clostridium botulinum (strain Alaska E43 / Type E3).